A 274-amino-acid chain; its full sequence is Dermonecrotic toxin LarSicTox-alphaIV1 (274 aa).

H5 is an active-site residue. Residues E25 and D27 each coordinate Mg(2+). Residue H41 is the Nucleophile of the active site. Cystine bridges form between C45/C51 and C47/C192. D85 lines the Mg(2+) pocket.

This sequence belongs to the arthropod phospholipase D family. Class II subfamily. Mg(2+) is required as a cofactor. As to expression, expressed by the venom gland.

It is found in the secreted. It catalyses the reaction an N-(acyl)-sphingosylphosphocholine = an N-(acyl)-sphingosyl-1,3-cyclic phosphate + choline. It carries out the reaction an N-(acyl)-sphingosylphosphoethanolamine = an N-(acyl)-sphingosyl-1,3-cyclic phosphate + ethanolamine. The enzyme catalyses a 1-acyl-sn-glycero-3-phosphocholine = a 1-acyl-sn-glycero-2,3-cyclic phosphate + choline. The catalysed reaction is a 1-acyl-sn-glycero-3-phosphoethanolamine = a 1-acyl-sn-glycero-2,3-cyclic phosphate + ethanolamine. Its function is as follows. Dermonecrotic toxins cleave the phosphodiester linkage between the phosphate and headgroup of certain phospholipids (sphingolipid and lysolipid substrates), forming an alcohol (often choline) and a cyclic phosphate. This toxin acts on sphingomyelin (SM). It may also act on ceramide phosphoethanolamine (CPE), lysophosphatidylcholine (LPC) and lysophosphatidylethanolamine (LPE), but not on lysophosphatidylserine (LPS), and lysophosphatidylglycerol (LPG). It acts by transphosphatidylation, releasing exclusively cyclic phosphate products as second products. Induces dermonecrosis, hemolysis, increased vascular permeability, edema, inflammatory response, and platelet aggregation. This chain is Dermonecrotic toxin LarSicTox-alphaIV1, found in Loxosceles arizonica (Arizona brown spider).